Here is a 674-residue protein sequence, read N- to C-terminus: Methionine--tRNA ligase (674 aa).

The short motif at 11 to 21 is the 'HIGH' region element; the sequence is PYANGDLHLGH. 4 residues coordinate Zn(2+): C142, C145, C155, and C158. The 'KMSKS' region signature appears at 330 to 334; that stretch reads KMSKS. K333 lines the ATP pocket. The 101-residue stretch at 574-674 folds into the tRNA-binding domain; it reads DFMKVDLRIA…EGAQPGMRVK (101 aa).

This sequence belongs to the class-I aminoacyl-tRNA synthetase family. MetG type 1 subfamily. In terms of assembly, homodimer. Zn(2+) serves as cofactor.

It is found in the cytoplasm. It catalyses the reaction tRNA(Met) + L-methionine + ATP = L-methionyl-tRNA(Met) + AMP + diphosphate. Is required not only for elongation of protein synthesis but also for the initiation of all mRNA translation through initiator tRNA(fMet) aminoacylation. In Francisella tularensis subsp. tularensis (strain FSC 198), this protein is Methionine--tRNA ligase.